A 562-amino-acid chain; its full sequence is Arginine--tRNA ligase (562 aa).

Positions 122 to 132 (PNIAKDMHVGH) match the 'HIGH' region motif.

It belongs to the class-I aminoacyl-tRNA synthetase family. Monomer.

Its subcellular location is the cytoplasm. It catalyses the reaction tRNA(Arg) + L-arginine + ATP = L-arginyl-tRNA(Arg) + AMP + diphosphate. The sequence is that of Arginine--tRNA ligase from Chlamydia abortus (strain DSM 27085 / S26/3) (Chlamydophila abortus).